The chain runs to 127 residues: Mediator of RNA polymerase II transcription subunit 31 (127 aa).

The protein belongs to the Mediator complex subunit 31 family. Component of the Mediator complex, which is composed of at least 21 subunits that form three structurally distinct submodules. The Mediator head module contains MED6, MED8, MED11, SRB4/MED17, SRB5/MED18, ROX3/MED19, SRB2/MED20 and SRB6/MED22, the middle module contains MED1, MED4, NUT1/MED5, MED7, CSE2/MED9, NUT2/MED10, SRB7/MED21 and SOH1/MED31, and the tail module contains MED2, PGD1/MED3, RGR1/MED14, GAL11/MED15 and SIN4/MED16. The head and the middle modules interact directly with RNA polymerase II, whereas the elongated tail module interacts with gene-specific regulatory proteins.

It is found in the nucleus. Its function is as follows. Component of the Mediator complex, a coactivator involved in the regulated transcription of nearly all RNA polymerase II-dependent genes. Mediator functions as a bridge to convey information from gene-specific regulatory proteins to the basal RNA polymerase II transcription machinery. The Mediator complex, having a compact conformation in its free form, is recruited to promoters by direct interactions with regulatory proteins and serves for the assembly of a functional preinitiation complex with RNA polymerase II and the general transcription factors. The Mediator complex unfolds to an extended conformation and partially surrounds RNA polymerase II, specifically interacting with the unphosphorylated form of the C-terminal domain (CTD) of RNA polymerase II. The Mediator complex dissociates from the RNA polymerase II holoenzyme and stays at the promoter when transcriptional elongation begins. The sequence is that of Mediator of RNA polymerase II transcription subunit 31 (SOH1) from Saccharomyces cerevisiae (strain ATCC 204508 / S288c) (Baker's yeast).